The sequence spans 259 residues: Deoxyribose-phosphate aldolase (259 aa).

Residue D102 is the Proton donor/acceptor of the active site. K167 (schiff-base intermediate with acetaldehyde) is an active-site residue. The Proton donor/acceptor role is filled by K201.

It belongs to the DeoC/FbaB aldolase family. DeoC type 2 subfamily.

Its subcellular location is the cytoplasm. The catalysed reaction is 2-deoxy-D-ribose 5-phosphate = D-glyceraldehyde 3-phosphate + acetaldehyde. It functions in the pathway carbohydrate degradation; 2-deoxy-D-ribose 1-phosphate degradation; D-glyceraldehyde 3-phosphate and acetaldehyde from 2-deoxy-alpha-D-ribose 1-phosphate: step 2/2. Catalyzes a reversible aldol reaction between acetaldehyde and D-glyceraldehyde 3-phosphate to generate 2-deoxy-D-ribose 5-phosphate. This is Deoxyribose-phosphate aldolase from Shigella boydii serotype 4 (strain Sb227).